A 370-amino-acid chain; its full sequence is DNA-directed RNA polymerase II subunit GRINL1A (370 aa).

Residues 1-20 (MSSLPRGFEPQTPEDLGQRS) form a disordered region. Residues 15-69 (DLGQRSLAELREMLKRQERLLRNVKFICKLPDKGKKISDAVTKLKAAIAEREEVR) adopt a coiled-coil conformation. Positions 29-68 (KRQERLLRNVKFICKLPDKGKKISDAVTKLKAAIAEREEV) are important for transcription repressor activity. Disordered stretches follow at residues 93 to 172 (DGDR…ASEG), 204 to 226 (DPTE…WSGP), and 241 to 283 (KNPM…RRDR). Positions 101–131 (NSDQILDTSSPVPGCSSVANITSSQTTSRQQ) are enriched in polar residues. Over residues 138–152 (RGGDAEAAEAEHTVS) the composition is skewed to basic and acidic residues. Residues 155 to 170 (PTSSSGAPAPSSSQAS) are compositionally biased toward low complexity. A compositionally biased stretch (basic and acidic residues) spans 205–214 (PTEHHSEGNR). The segment at 228–299 (KKPHYMEVLE…TAARLLPLHH (72 aa)) is interaction with Pol II. The span at 254–266 (VLPSQPRDSSSAC) shows a compositional bias: polar residues. The residue at position 271 (Ser-271) is a Phosphoserine. Residues 300-315 (LPTQLLSIEESLALQR) form an important for transcription repressor activity region. Residues 303–328 (QLLSIEESLALQRQQKQSYEEIQAKL) are a coiled coil. Residues 316–341 (QQKQSYEEIQAKLAAQKLAERLNIKM) are interaction with Pol II. Residues 340–370 (KMQSYNPEGESSRKYREVRDEDDDQSSEDEF) are disordered. Residues 349-358 (ESSRKYREVR) are compositionally biased toward basic and acidic residues. A compositionally biased stretch (acidic residues) spans 359–370 (DEDDDQSSEDEF).

It belongs to the GRINL1 family. As to quaternary structure, component of the Pol II(G) complex, which contains the RNA polymerase II (Pol II) core complex subunits and POLR2M and appears to be an abundant form of Pol II. Dephosphorylated at Ser-271 by the PNUTS-PP1 complex, promoting RNA polymerase II transcription pause-release.

The protein localises to the nucleus. Appears to be a stable component of the Pol II(G) complex form of RNA polymerase II (Pol II). Pol II synthesizes mRNA precursors and many functional non-coding RNAs and is the central component of the basal RNA polymerase II transcription machinery. May play a role in Mediator complex-dependent regulation of transcription activation. Acts in vitro as a negative regulator of transcriptional activation; this repression is relieved by the Mediator complex, which restores Pol II(G) activator-dependent transcription to a level equivalent to that of Pol II. This Bos taurus (Bovine) protein is DNA-directed RNA polymerase II subunit GRINL1A (POLR2M).